We begin with the raw amino-acid sequence, 361 residues long: G-protein coupled receptor 68 (361 aa).

Over 1 to 12 (MGNITADNTSMN) the chain is Extracellular. N-linked (GlcNAc...) asparagine glycosylation is found at Asn3 and Asn8. A helical membrane pass occupies residues 13 to 49 (CDIDHTIHQTLAPVVYVMVLVVGFPANCLSLYYGYLQ). 2 disulfide bridges follow: Cys13–Cys258 and Cys94–Cys172. Topologically, residues 50-53 (IKAR) are cytoplasmic. The helical transmembrane segment at 54–84 (NELGVYLCNLTVADLFYICSLPFWLQYVLQH) threads the bilayer. Residues 85–89 (DHWSH) lie on the Extracellular side of the membrane. The chain crosses the membrane as a helical span at residues 90-125 (DDLSCQVCGILLYENIYISVGFLCCISIDRYLAVAH). Over 126 to 133 (PFRFHQFR) the chain is Cytoplasmic. A helical membrane pass occupies residues 134–160 (TLKAAMGVSALIWVKELLTSIYFLMHE). Residues 161 to 176 (EVVEDADRHRVCFEHY) lie on the Extracellular side of the membrane. The extracellular loop 2 (ECL2) stretch occupies residues 161–176 (EVVEDADRHRVCFEHY). The chain crosses the membrane as a helical span at residues 177–214 (PLEPRQRGINYYRFLVGFLFPICLLLASYRGILRAVRR). The Cytoplasmic segment spans residues 215 to 218 (SHGT). A helical transmembrane segment spans residues 219–254 (QKSRKDQIQRLVLSTVVIFLACFLPYHVLLLVRSLW). Over 255-260 (ESSCDF) the chain is Extracellular. The helical transmembrane segment at 261 to 289 (AKGIFNAYHFSLLLTSFNCVADPVLYCFV) threads the bilayer. The Cytoplasmic segment spans residues 290–361 (SETTHRDLAR…MGGSPAGGLS (72 aa)). The tract at residues 340-361 (LHPAFQTPHPPGMGGSPAGGLS) is disordered. Gly residues predominate over residues 351–361 (GMGGSPAGGLS).

It belongs to the G-protein coupled receptor 1 family.

The protein localises to the cell membrane. Its activity is regulated as follows. Activated by a network of residues that connects an extracellular-facing cavity to Glu-149, a conserved charged residue buried in the transmembrane core of the receptor. Protonation likely drives conformational changes in extracellular loop 2 (ECL2), which stabilizes movement of transmembrane 3 (TM3) and a series of rearrangements that connect the extracellular-facing cavity to Glu-149, a residue only conserved in proton-sensing G-protein coupled receptors. Activated in an allosteric manner by divalent metal ions at the extracellular surface following the order: Cd(2+) &gt; Co(2+) &gt; Ni(2+) &gt; Zn(2+) &gt; Fe(2+) &gt; Ca(2+) &gt; Mg(2+). Functionally, proton-sensing G-protein coupled receptor activated by extracellular pH, which is required to monitor pH changes and generate adaptive reactions. The receptor is almost silent at pH 7.8 but fully activated at pH 6.8. Ligand binding causes a conformation change that triggers signaling via guanine nucleotide-binding proteins (G proteins) and modulates the activity of downstream effectors, such as phospholipase C. GPR68 is mainly coupled to G(q) G proteins and mediates production of diacylglycerol (DAG) and inositol 1,4,5-trisphosphate (IP3). Acts as a key mechanosensor of fluid shear stress and membrane stretch. Expressed in endothelial cells of small-diameter resistance arteries, where it mediates flow-induced dilation in response to shear stress. May represents an osteoblastic pH sensor regulating cell-mediated responses to acidosis in bone. Acts as a regulator of calcium-sensing receptor CASR in a seesaw manner: GPR68-mediated signaling inhibits CASR signaling in response to protons, while CASR inhibits GPR68 in presence of extracellular calcium. This Bos taurus (Bovine) protein is G-protein coupled receptor 68 (GPR68).